The chain runs to 142 residues: Transcriptional regulator MraZ (142 aa).

SpoVT-AbrB domains are found at residues 5–51 (ASAL…PRPE) and 77–120 (AADV…DAAT).

The protein belongs to the MraZ family. Forms oligomers.

The protein resides in the cytoplasm. Its subcellular location is the nucleoid. This Cupriavidus pinatubonensis (strain JMP 134 / LMG 1197) (Cupriavidus necator (strain JMP 134)) protein is Transcriptional regulator MraZ.